The sequence spans 565 residues: Bicyclogermacrene synthase (565 aa).

Mg(2+) is bound by residues Asp317, Asp321, Asp461, and Glu469. Positions 317–321 match the DDXXD motif motif; it reads DDTFD.

This sequence belongs to the terpene synthase family. Mg(2+) is required as a cofactor.

The enzyme catalyses (2E,6E)-farnesyl diphosphate = bicyclogermacrene + diphosphate. The protein operates within secondary metabolite biosynthesis; terpenoid biosynthesis. In terms of biological role, sesquiterpene synthase converting farnesyl diphosphate to bicyclogermacrene as the major product. The sequence is that of Bicyclogermacrene synthase from Phyla dulcis (Aztec sweet herb).